We begin with the raw amino-acid sequence, 165 residues long: Large ribosomal subunit protein uL10 (165 aa).

This sequence belongs to the universal ribosomal protein uL10 family. As to quaternary structure, part of the ribosomal stalk of the 50S ribosomal subunit. The N-terminus interacts with L11 and the large rRNA to form the base of the stalk. The C-terminus forms an elongated spine to which L12 dimers bind in a sequential fashion forming a multimeric L10(L12)X complex.

In terms of biological role, forms part of the ribosomal stalk, playing a central role in the interaction of the ribosome with GTP-bound translation factors. The polypeptide is Large ribosomal subunit protein uL10 (Shewanella halifaxensis (strain HAW-EB4)).